The following is a 431-amino-acid chain: Protein PIN-LIKES 6 (431 aa).

Topologically, residues 1–29 (MIARILAALADSMEMPVAAGGGSVLGTIK) are lumenal. Residues 30–50 (IAVMPIAKVFTMCFLGLLMAS) form a helical membrane-spanning segment. Residues 51-66 (KYVNILPPSGRKLLNG) lie on the Cytoplasmic side of the membrane. A helical membrane pass occupies residues 67-87 (LVFSLLLPCLIFSQLGQAVTL). Residues 88-93 (QKMLQW) lie on the Lumenal side of the membrane. A helical membrane pass occupies residues 94–114 (WFIPVNVVLGTISGSIIGFIV). At 115–128 (ASIVRPPYPYFKFT) the chain is on the cytoplasmic side. A helical transmembrane segment spans residues 129–149 (IIQIGVGNIGNVPLVLLAALC). Over 150–169 (RDTSNPFGDSEKCSIDGTAY) the chain is Lumenal. Residues 170–190 (ISFGQWVGAIILYTYVYQMFA) traverse the membrane as a helical segment. The Cytoplasmic segment spans residues 191-268 (PPPEGFDAEE…FLYEKLKLKQ (78 aa)). Residues 269–289 (IVQPAIVASILAMILGAIPFT) form a helical membrane-spanning segment. Residues 290-306 (KKLIFTNGAPLFFFTDS) are Lumenal-facing. A helical transmembrane segment spans residues 307 to 327 (CMILGDAMIPCILLALGGNLI). Topologically, residues 328–340 (NGPGSSKLGFKTT) are cytoplasmic. The chain crosses the membrane as a helical span at residues 341-361 (AAIIIGRLVLVPPVGLGIVTV). The Lumenal portion of the chain corresponds to 362–376 (ADKLGFLPADDKMFR). The chain crosses the membrane as a helical span at residues 377-397 (FVLLLQHTMPTSVLSGAVANL). Residues 398 to 406 (RGCGRESAA) are Cytoplasmic-facing. A helical membrane pass occupies residues 407–427 (VLFWVHIFAIFSMAGWMVLYI). The Lumenal segment spans residues 428–431 (NILF).

This sequence belongs to the auxin efflux carrier (TC 2.A.69.2) family. As to expression, expressed in seedlings, rosette and cauline leaves, stems and flowers.

The protein resides in the endoplasmic reticulum membrane. Its function is as follows. Involved in cellular auxin homeostasis by regulating auxin metabolism. Regulates intracellular auxin accumulation at the endoplasmic reticulum and thus auxin availability for nuclear auxin signaling. In Arabidopsis thaliana (Mouse-ear cress), this protein is Protein PIN-LIKES 6.